The primary structure comprises 888 residues: Extra-large guanine nucleotide-binding protein 1 (888 aa).

Positions 98–119 are disordered; sequence SVIEHTEEEEEEEGGDGEDCEL. The segment covering 103 to 118 has biased composition (acidic residues); that stretch reads TEEEEEEEGGDGEDCE. The Nuclear localization signal motif lies at 205–222; it reads RRVRVVPVKKQPQTKGKK. The RING-type; degenerate zinc finger occupies 225 to 268; the sequence is CYRCFKGSRFTEKEVCLVCDAKYCNSCVLRAMGSMPEGRKCVTC. The G-alpha domain occupies 482–879; the sequence is TLQKILLVGN…NICMSEYSMY (398 aa). The G1 motif stretch occupies residues 485-498; the sequence is KILLVGNSGSGTST. GTP contacts are provided by residues 490-498 and 661-669; these read GNSGSGTST and DILYAEGVT. The Ca(2+) site is built by Ser497 and Thr669. Residues 661 to 669 are G2 motif; the sequence is DILYAEGVT. The segment at 702–711 is G3 motif; that stretch reads YQLIRVPSRG. The segment at 770-777 is G4 motif; the sequence is LLILNKYD. Residue 774-777 coordinates GTP; the sequence is NKYD. The tract at residues 843-848 is G5 motif; sequence SKSLDP.

The protein belongs to the G-alpha family. XLG subfamily. Ca(2+) serves as cofactor. Ubiquitous. Strongly expressed in vascular tissues, root and shoot meristems and lateral root primordia.

Its subcellular location is the nucleus. Guanine nucleotide-binding proteins (G proteins) are involved as modulators or transducers in various transmembrane signaling systems. Binds GTP with specificity. Plays a role in the root morphogenesis by regulation of the cell proliferation. This chain is Extra-large guanine nucleotide-binding protein 1 (XLG1), found in Arabidopsis thaliana (Mouse-ear cress).